The chain runs to 366 residues: L-Ala-D/L-Glu epimerase (366 aa).

Residues arginine 24, threonine 135, and lysine 160 each contribute to the substrate site. The active-site Proton acceptor; specific for (R)-substrate epimerization is lysine 162. Residues aspartate 191, glutamate 219, and aspartate 244 each contribute to the Mg(2+) site. The active-site Proton acceptor; specific for (S)-substrate epimerization is the lysine 268. Positions 296, 298, 321, and 323 each coordinate substrate.

It belongs to the mandelate racemase/muconate lactonizing enzyme family. Homooctamer; tetramer of dimers. Requires Mg(2+) as cofactor.

The enzyme catalyses L-alanyl-L-glutamate = L-alanyl-D-glutamate. It participates in cell wall degradation; peptidoglycan degradation. Catalyzes the epimerization of L-Ala-D-Glu to L-Ala-L-Glu and has probably a role in the metabolism of the murein peptide, of which L-Ala-D-Glu is a component. Is also able to catalyze the reverse reaction and the epimerization of the other Ala-X dipeptides L-Ala-L-Asp, L-Ala-L-Leu, L-Ala-L-Met, and L-Ala-L-Ser. Is not able to epimerize other L-Ala-X dipeptides. Is also active with L-Ser-L-Glu and, oddly, L-Pro-L-Glu, but not with L-Glu-L-Glu, L-Lys-L-Glu, L-Lys-L-Ala, or D-Ala-D-Ala. The sequence is that of L-Ala-D/L-Glu epimerase (ykfB) from Bacillus subtilis (strain 168).